Here is a 274-residue protein sequence, read N- to C-terminus: Diaminopimelate epimerase (274 aa).

Substrate-binding residues include Asn-11, Gln-44, and Asn-64. Cys-73 acts as the Proton donor in catalysis. Substrate is bound by residues 74–75 (GN), Asn-157, Asn-190, and 208–209 (ER). Catalysis depends on Cys-217, which acts as the Proton acceptor. Substrate is bound at residue 218–219 (GS).

The protein belongs to the diaminopimelate epimerase family. As to quaternary structure, homodimer.

It localises to the cytoplasm. It carries out the reaction (2S,6S)-2,6-diaminopimelate = meso-2,6-diaminopimelate. It functions in the pathway amino-acid biosynthesis; L-lysine biosynthesis via DAP pathway; DL-2,6-diaminopimelate from LL-2,6-diaminopimelate: step 1/1. Functionally, catalyzes the stereoinversion of LL-2,6-diaminopimelate (L,L-DAP) to meso-diaminopimelate (meso-DAP), a precursor of L-lysine and an essential component of the bacterial peptidoglycan. The protein is Diaminopimelate epimerase of Actinobacillus succinogenes (strain ATCC 55618 / DSM 22257 / CCUG 43843 / 130Z).